A 65-amino-acid polypeptide reads, in one-letter code: Vespid chemotactic peptide 5h (65 aa).

The signal sequence occupies residues 1–23 (MKYNIVFLFAIIASLACLQLTFA). 7 AXPX repeats span residues 23–26 (AAPA), 27–30 (ASPL), 31–34 (ANPG), 35–38 (ASPD), 39–42 (AAPN), 43–46 (ADPL), and 47–50 (ADPF). A propeptide spanning residues 24–49 (APAASPLANPGASPDAAPNADPLADP) is cleaved from the precursor. The residue at position 62 (Leu62) is a Leucine amide.

Belongs to the MCD family. Crabrolin subfamily. As to expression, expressed by the venom gland.

The protein resides in the secreted. Shows antimicrobial activity against the Gram-negative bacteria E.coli ATCC 25922 (MIC=30 ug/ml), the Gram-positive bacteria S.aureus ATCC 2592 (MIC=5 ug/ml) and the fungus C.albicans ATCC 2002 (MIC=25 ug/ml). Acts as a mast cell degranulating peptide. Its mast cell degranulation activity may be related to the activation of G-protein coupled receptors in mast cells as well as interaction with other proteins located in cell endosomal membranes in the mast cells. Induces the chemotaxis of neutrophils. The protein is Vespid chemotactic peptide 5h of Vespa magnifica (Hornet).